We begin with the raw amino-acid sequence, 504 residues long: Cytochrome P450 3A41 (504 aa).

Cysteine 443 provides a ligand contact to heme.

It belongs to the cytochrome P450 family. It depends on heme as a cofactor. As to expression, expressed in liver. Also expressed in the kidneys of female mice, with traces in the stomach, ovary, and heart of female mice and in the testis of male mice.

Its subcellular location is the endoplasmic reticulum membrane. It is found in the microsome membrane. The catalysed reaction is an organic molecule + reduced [NADPH--hemoprotein reductase] + O2 = an alcohol + oxidized [NADPH--hemoprotein reductase] + H2O + H(+). This is Cytochrome P450 3A41 (Cyp3a41a) from Mus musculus (Mouse).